Reading from the N-terminus, the 209-residue chain is Glutathione S-transferase F7 (209 aa).

Positions 2–83 (AGIKVFGHPA…YIAHFYSDKG (82 aa)) constitute a GST N-terminal domain. Residues 12-13 (ST), 41-42 (HK), 54-55 (KV), and 67-68 (ES) each bind glutathione. Residues 90–209 (GSKDIAGIAM…TSRPSAKKVL (120 aa)) enclose the GST C-terminal domain.

Belongs to the GST superfamily. Phi family.

Its subcellular location is the cytoplasm. The protein resides in the cytosol. It catalyses the reaction RX + glutathione = an S-substituted glutathione + a halide anion + H(+). May be involved in the conjugation of reduced glutathione to a wide number of exogenous and endogenous hydrophobic electrophiles and have a detoxification role against certain herbicides. In Arabidopsis thaliana (Mouse-ear cress), this protein is Glutathione S-transferase F7.